We begin with the raw amino-acid sequence, 317 residues long: Fe-S cluster assembly protein dre2 (317 aa).

An N-terminal SAM-like domain region spans residues 22–152 (PVQAKRTLLL…KPNFEPSAAV (131 aa)). Residues 153-209 (PLKFGLKKKNKPTPTAVPSIPTGFAAPMGIDSPVTNHDRDEDDELINEDTLLSEEDL) are linker. 4 residues coordinate [2Fe-2S] cluster: Cys-219, Cys-230, Cys-233, and Cys-235. Residues 219–235 (CQPKTGRRRRACKDCTC) form a fe-S binding site A region. Residues Cys-280, Cys-283, Cys-291, and Cys-294 each contribute to the [4Fe-4S] cluster site. Short sequence motifs (cx2C motif) lie at residues 280–283 (CGSC) and 291–294 (CDGC). The interval 280 to 294 (CGSCALGDAFRCDGC) is fe-S binding site B.

This sequence belongs to the anamorsin family. In terms of assembly, monomer. Interacts with tah18. Interacts with mia40. It depends on [2Fe-2S] cluster as a cofactor. Requires [4Fe-4S] cluster as cofactor.

It localises to the cytoplasm. The protein localises to the mitochondrion intermembrane space. Its function is as follows. Component of the cytosolic iron-sulfur (Fe-S) protein assembly (CIA) machinery required for the maturation of extramitochondrial Fe-S proteins. Part of an electron transfer chain functioning in an early step of cytosolic Fe-S biogenesis, facilitating the de novo assembly of a [4Fe-4S] cluster on the scaffold complex cfd1-nbp35. Electrons are transferred to dre2 from NADPH via the FAD- and FMN-containing protein tah18. Tah18-dre2 are also required for the assembly of the diferric tyrosyl radical cofactor of ribonucleotide reductase (RNR), probably by providing electrons for reduction during radical cofactor maturation in the catalytic small subunit rnr2. The polypeptide is Fe-S cluster assembly protein dre2 (Penicillium rubens (strain ATCC 28089 / DSM 1075 / NRRL 1951 / Wisconsin 54-1255) (Penicillium chrysogenum)).